Consider the following 353-residue polypeptide: MSEPLKPRIDFDGPLQAEKIPPLKSARAFDTLEADNFAPARLVTGEEEEGAAEAVVESVLRPKRSLWRRMVSAGLAIFGVSVVAQGVQWTANAWQTQDWIALGGCVAGALIVGAGVGSVATEWRRLWRLRQRAHERDEARDMLHSHAVGKAKAFCEKLAQQAGLDQSHPALQRWYAAIHETQSDREVVSLYAQLVQPVLDAQARREISRSAAESTLMIAVSPLALVDMAFIAWRNLRLINRIATLYGIELGYYSRLRLFRLVLLNIAFAGASELVREVGMDWMSQDLAARLSARAAQGIGAGLLTARLGIKAMELCRPLPWIADDKPRLGDFRRELIGQLKETLQKSKTSPEK.

3 helical membrane-spanning segments follow: residues 70 to 90 (MVSA…VQWT), 99 to 119 (WIAL…VGSV), and 213 to 233 (ESTL…FIAW).

It belongs to the UPF0283 family.

Its subcellular location is the cell inner membrane. In Klebsiella pneumoniae (strain 342), this protein is UPF0283 membrane protein KPK_3110.